The chain runs to 295 residues: AP-1-like transcription factor YAP4 (295 aa).

Residues S85, S89, and S196 each carry the phosphoserine modification. Residues 181–202 (ASYFPSNSTPATRKNSATTNLP) are compositionally biased toward polar residues. The tract at residues 181 to 205 (ASYFPSNSTPATRKNSATTNLPSEE) is disordered. The region spanning 237–295 (PLRNTKRAAQNRSAQKAFRQRREKYIKNLEEKSKLFDGLMKENSELKKMIESLKSKLKE) is the bZIP domain. A basic motif region spans residues 239-260 (RNTKRAAQNRSAQKAFRQRREK). The interval 262 to 271 (IKNLEEKSKL) is leucine-zipper.

It belongs to the bZIP family. YAP subfamily. Homodimer.

The protein localises to the cytoplasm. It localises to the nucleus. Transcription activator involved in the regulation of genes expressed in response to environmental changes and metabolic requirements. According to genome-wide promoter binding and gene expression studies it regulates, among others, genes involved in ribosome biogenesis, and protein synthesis. It may also be involved in pleiotropic drug resistance. When overexpressed it confers increased resistance to cisplatin, the DNA-alkylating agents methylmethanosulfonate, and mitomycin C, the antimalarial drugs quinidine, mefloquine, and chloroquine, and increases cellular tolerance to sodium and lithium. Preferentially binds 5'-TTACTAA-3'. This chain is AP-1-like transcription factor YAP4 (CIN5), found in Saccharomyces cerevisiae (strain ATCC 204508 / S288c) (Baker's yeast).